Here is a 308-residue protein sequence, read N- to C-terminus: uncharacterized protein (308 aa).

The next 7 helical transmembrane spans lie at 10 to 30 (IILL…TNLI), 91 to 111 (LPTI…VVIL), 115 to 135 (LGLI…LIGI), 178 to 198 (VIPM…LGLM), 219 to 239 (ITVL…VDIL), 251 to 271 (LIVL…KHSI), and 288 to 308 (INYT…IAFF).

It to M.jannaschii MJ0871, MJ1556 and MJ1589.

The protein resides in the cell membrane. This is an uncharacterized protein from Methanocaldococcus jannaschii (strain ATCC 43067 / DSM 2661 / JAL-1 / JCM 10045 / NBRC 100440) (Methanococcus jannaschii).